Reading from the N-terminus, the 419-residue chain is MRAVGLITEYNPFHNGHLHHLRASREAAGAEVAVAVMSGHFLQRGEPALLDKWRRAEMALRCGVDVVVELPFPFACASAPHFARGAVQCLDALGVDSLCFGSESGDLGALQRCAQLLEECGEQVAERTATLLRRGMHYAAARSQVCAELSGCDAATLPLHQPNNILGIEYLRALRATGSAMQPFTISRLGAGYHDDAVGPGNIASASGIRKRLAMGETVDELLPAPAVDVVAGARADRLFPDEDLLHRLLLAQIFRGRDYLQSLYQVESGIDARLTDAAATSRDWQALVDAVKVRQFTRTRIQRTLMYILNDVRGDLMASLLAAGPLYLRLLGSSPRGRAFLGAARKRRRLPMVTNLSRIYSQLKRTYGPRSEDYRLALAMLELDLRATRNYSLLLPGWSGVSRERDFFEAPLDIHSAI.

ATP-binding positions include 7–20, Gly101, Asn163, and Arg188; that span reads ITEY…HLHH.

It belongs to the TmcAL family.

It is found in the cytoplasm. The catalysed reaction is cytidine(34) in elongator tRNA(Met) + acetate + ATP = N(4)-acetylcytidine(34) in elongator tRNA(Met) + AMP + diphosphate. Functionally, catalyzes the formation of N(4)-acetylcytidine (ac(4)C) at the wobble position of elongator tRNA(Met), using acetate and ATP as substrates. First activates an acetate ion to form acetyladenylate (Ac-AMP) and then transfers the acetyl group to tRNA to form ac(4)C34. This is tRNA(Met) cytidine acetate ligase from Syntrophotalea carbinolica (strain DSM 2380 / NBRC 103641 / GraBd1) (Pelobacter carbinolicus).